Consider the following 372-residue polypeptide: Glutamate 5-kinase (372 aa).

Lysine 14 serves as a coordination point for ATP. Positions 54, 141, and 153 each coordinate substrate. Threonine 173–aspartate 174 is a binding site for ATP. The PUA domain maps to arginine 280–methionine 358.

The protein belongs to the glutamate 5-kinase family.

The protein resides in the cytoplasm. It catalyses the reaction L-glutamate + ATP = L-glutamyl 5-phosphate + ADP. Its pathway is amino-acid biosynthesis; L-proline biosynthesis; L-glutamate 5-semialdehyde from L-glutamate: step 1/2. Its function is as follows. Catalyzes the transfer of a phosphate group to glutamate to form L-glutamate 5-phosphate. This is Glutamate 5-kinase from Burkholderia mallei (strain NCTC 10229).